Here is a 441-residue protein sequence, read N- to C-terminus: ATP-dependent RNA helicase sub2 (441 aa).

Residues 19–29 (DAAATTAAPAA) show a composition bias toward low complexity. The tract at residues 19–43 (DAAATTAAPAANGAQDKKGDLTVSG) is disordered. The Q motif motif lies at 58–86 (TGFRDFLLKGELLRAITDCGFEHPSEVQQ). Residues 89-264 (IPTAILNVDV…KKFMRNPLEV (176 aa)) enclose the Helicase ATP-binding domain. 102-109 (AKSGLGKT) contributes to the ATP binding site. The DEAD box motif lies at 211–214 (DECD). Residues 276–437 (GLQQYYIKLS…EYPEGGVDSS (162 aa)) form the Helicase C-terminal domain.

Belongs to the DEAD box helicase family. DECD subfamily.

The protein resides in the nucleus. It carries out the reaction ATP + H2O = ADP + phosphate + H(+). Functionally, ATP-binding RNA helicase involved in transcription elongation and required for the export of mRNA out of the nucleus. SUB2 also plays a role in pre-mRNA splicing and spliceosome assembly. May be involved in rDNA and telomeric silencing, and maintenance of genome integrity. In Aspergillus clavatus (strain ATCC 1007 / CBS 513.65 / DSM 816 / NCTC 3887 / NRRL 1 / QM 1276 / 107), this protein is ATP-dependent RNA helicase sub2 (sub2).